Reading from the N-terminus, the 92-residue chain is RNA-binding protein Hfq (92 aa).

Positions 9 to 68 constitute a Sm domain; the sequence is DPYLNALRRERIPVSIYLVNGIKLQGQIESFDQFVILLKNTVSQMVYKHAISTVVPARSV. Over residues 69–81 the composition is skewed to polar residues; the sequence is SHNNGGTSHTQQA. The interval 69–92 is disordered; sequence SHNNGGTSHTQQAPAVEAVADKAE.

Belongs to the Hfq family. Homohexamer.

Functionally, RNA chaperone that binds small regulatory RNA (sRNAs) and mRNAs to facilitate mRNA translational regulation in response to envelope stress, environmental stress and changes in metabolite concentrations. Also binds with high specificity to tRNAs. The sequence is that of RNA-binding protein Hfq from Actinobacillus pleuropneumoniae serotype 5b (strain L20).